The primary structure comprises 309 residues: THO complex subunit Tho3 (309 aa).

6 WD repeats span residues 22–61 (GQQG…FKFT), 65–107 (GNRG…PIAE), 109–148 (ESNY…IMET), 192–231 (AHNS…CERS), 234–273 (RMDY…QIWK), and 275–309 (PTNG…IFGL).

This sequence belongs to the THOC3 family. In terms of assembly, component of the transcription/export (TREX) complex, which is at least is formed of SUB2, TEX1 and YRA1 and the THO complex composed of HPR1, MFT1, THO2 and THP1.

It localises to the nucleus. Component of the TREX complex, which operates in coupling transcription elongation to mRNA export. The chain is THO complex subunit Tho3 (THO3) from Schizosaccharomyces pombe (strain 972 / ATCC 24843) (Fission yeast).